The following is a 155-amino-acid chain: Large-conductance mechanosensitive channel (155 aa).

Transmembrane regions (helical) follow at residues 25 to 45 (VLDLAVGVIIGGAFGKIVTSL) and 98 to 118 (GDFITQAVNFVIVAFIIFLIV).

This sequence belongs to the MscL family. As to quaternary structure, homopentamer.

The protein localises to the cell inner membrane. Functionally, channel that opens in response to stretch forces in the membrane lipid bilayer. May participate in the regulation of osmotic pressure changes within the cell. This is Large-conductance mechanosensitive channel from Novosphingobium aromaticivorans (strain ATCC 700278 / DSM 12444 / CCUG 56034 / CIP 105152 / NBRC 16084 / F199).